The chain runs to 372 residues: Cytochrome b (372 aa).

Transmembrane regions (helical) follow at residues 32–52 (LGFN…CLSW), 77–99 (FIIR…IHII), 114–134 (VWFF…IGYT), and 180–200 (LHSI…AHFF). Heme b-binding residues include H83 and H97. Residues H184 and H198 each contribute to the heme b site. H203 is a binding site for a ubiquinone. 4 helical membrane passes run 228–248 (YYLR…YYIC), 297–317 (LLFV…LIFI), 330–350 (LVLF…VLCF), and 351–371 (PLWM…VCRL).

This sequence belongs to the cytochrome b family. As to quaternary structure, the main subunits of complex b-c1 are: cytochrome b, cytochrome c1 and the Rieske protein. It depends on heme b as a cofactor.

It localises to the mitochondrion inner membrane. Its function is as follows. Component of the ubiquinol-cytochrome c reductase complex (complex III or cytochrome b-c1 complex) that is part of the mitochondrial respiratory chain. The b-c1 complex mediates electron transfer from ubiquinol to cytochrome c. Contributes to the generation of a proton gradient across the mitochondrial membrane that is then used for ATP synthesis. The sequence is that of Cytochrome b (MT-CYB) from Trypanoplasma borreli.